A 77-amino-acid polypeptide reads, in one-letter code: Small ribosomal subunit protein bS20 (77 aa).

It belongs to the bacterial ribosomal protein bS20 family.

Its function is as follows. Binds directly to 16S ribosomal RNA. The protein is Small ribosomal subunit protein bS20 of Streptococcus uberis (strain ATCC BAA-854 / 0140J).